The sequence spans 386 residues: Lipid-A-disaccharide synthase (386 aa).

The protein belongs to the LpxB family.

The catalysed reaction is a lipid X + a UDP-2-N,3-O-bis[(3R)-3-hydroxyacyl]-alpha-D-glucosamine = a lipid A disaccharide + UDP + H(+). Its pathway is bacterial outer membrane biogenesis; LPS lipid A biosynthesis. Its function is as follows. Condensation of UDP-2,3-diacylglucosamine and 2,3-diacylglucosamine-1-phosphate to form lipid A disaccharide, a precursor of lipid A, a phosphorylated glycolipid that anchors the lipopolysaccharide to the outer membrane of the cell. This is Lipid-A-disaccharide synthase from Chromohalobacter salexigens (strain ATCC BAA-138 / DSM 3043 / CIP 106854 / NCIMB 13768 / 1H11).